The following is a 366-amino-acid chain: Leucine dehydrogenase (366 aa).

Residue Lys82 is part of the active site. 182-188 (GVGNVAY) is a binding site for NAD(+).

Belongs to the Glu/Leu/Phe/Val dehydrogenases family.

It catalyses the reaction L-leucine + NAD(+) + H2O = 4-methyl-2-oxopentanoate + NH4(+) + NADH + H(+). It functions in the pathway amino-acid degradation; L-leucine degradation; 4-methyl-2-oxopentanoate from L-leucine (dehydrogenase route): step 1/1. Catalyzes the reversible deamination of L-leucine to 4-methyl-2-oxopentanoate. The sequence is that of Leucine dehydrogenase (ldh) from Bacillus cereus.